Consider the following 280-residue polypeptide: Fasciclin-like arabinogalactan protein 3 (280 aa).

A signal peptide spans 1–24 (MGLKVSSSLLCLTILLAVSSIVSA). In terms of domain architecture, FAS1 spans 25–169 (VNITRVLEKY…LSVVQISMPI (145 aa)). Residues Asn26, Asn126, and Asn159 are each glycosylated (N-linked (GlcNAc...) asparagine). Positions 180-193 (VPPPPPMSSPPAPS) are enriched in pro residues. The tract at residues 180–262 (VPPPPPMSSP…EPPSSASNTG (83 aa)) is disordered. Over residues 219–234 (APETAPASAPSESDSP) the composition is skewed to low complexity. Ser256 carries GPI-anchor amidated serine lipidation. The propeptide at 257–280 (SASNTGLSFGAVLVLGFVASFVGF) is removed in mature form.

The protein belongs to the fasciclin-like AGP family.

It localises to the cell membrane. May be a cell surface adhesion protein. The polypeptide is Fasciclin-like arabinogalactan protein 3 (FLA3) (Arabidopsis thaliana (Mouse-ear cress)).